Consider the following 259-residue polypeptide: Thiazole synthase (259 aa).

Lys-99 serves as the catalytic Schiff-base intermediate with DXP. 1-deoxy-D-xylulose 5-phosphate-binding positions include Gly-161, 187–188, and 209–210; these read AG and NT.

Belongs to the ThiG family. Homotetramer. Forms heterodimers with either ThiH or ThiS.

Its subcellular location is the cytoplasm. The enzyme catalyses [ThiS sulfur-carrier protein]-C-terminal-Gly-aminoethanethioate + 2-iminoacetate + 1-deoxy-D-xylulose 5-phosphate = [ThiS sulfur-carrier protein]-C-terminal Gly-Gly + 2-[(2R,5Z)-2-carboxy-4-methylthiazol-5(2H)-ylidene]ethyl phosphate + 2 H2O + H(+). Its pathway is cofactor biosynthesis; thiamine diphosphate biosynthesis. In terms of biological role, catalyzes the rearrangement of 1-deoxy-D-xylulose 5-phosphate (DXP) to produce the thiazole phosphate moiety of thiamine. Sulfur is provided by the thiocarboxylate moiety of the carrier protein ThiS. In vitro, sulfur can be provided by H(2)S. The polypeptide is Thiazole synthase (Nitratiruptor sp. (strain SB155-2)).